The following is a 187-amino-acid chain: MGYVELIAALRRDGEEQLEKIRSDAEREAERVKGDASARIERLRAEYAERLASLEAAQARAILADAESKASSIRLATESALAVRLFLLARSSLHHLRDEGYEQLFADLVRELPPGEWRRVVVNPADMALAARHFPNAEIVSHPAIVGGLEVSEEGGSISVVNTLEKRMERAWPELLPEILRDIYREL.

This sequence belongs to the V-ATPase E subunit family.

In terms of biological role, produces ATP from ADP in the presence of a proton gradient across the membrane. The polypeptide is V-type ATP synthase subunit E (Geotalea uraniireducens (strain Rf4) (Geobacter uraniireducens)).